A 571-amino-acid polypeptide reads, in one-letter code: Leucine aminopeptidase A2, chloroplastic (571 aa).

A chloroplast-targeting transit peptide spans methionine 1–leucine 42. Mg(2+) contacts are provided by lysine 342 and aspartate 347. Lysine 354 is an active-site residue. Positions 367, 427, and 429 each coordinate Mg(2+). Arginine 431 is an active-site residue.

The protein belongs to the peptidase M17 family. Homohexamer (dimer of homotrimers). Mg(2+) serves as cofactor. In terms of tissue distribution, expressed during floral development. Expressed in healthy and senescent leaves, cotyledons (emergence from seed coats), pistils, sepals, petals, stamens, and floral buds (at protein level).

It localises to the plastid. The protein resides in the chloroplast. It carries out the reaction Release of an N-terminal amino acid, Xaa-|-Yaa-, in which Xaa is preferably Leu, but may be other amino acids including Pro although not Arg or Lys, and Yaa may be Pro. Amino acid amides and methyl esters are also readily hydrolyzed, but rates on arylamides are exceedingly low.. The enzyme catalyses Release of N-terminal proline from a peptide.. Catalyzes the removal of unsubstituted N-terminal amino acids from various peptides. When associated as homohexamer, catalyzes the proteolyzes of Xaa-Leu dipeptides. Possesses leucine aminopeptidase activity against the model substrate leucine-amido methyl coumarin. Presumably involved in the processing and regular turnover of intracellular proteins. Regulates wound signaling and has a role in insect defense. In terms of biological role, functions as a molecular chaperone to protect proteins from heat-induced damage. This chain is Leucine aminopeptidase A2, chloroplastic, found in Solanum lycopersicum (Tomato).